Reading from the N-terminus, the 426-residue chain is Glutamate-1-semialdehyde 2,1-aminomutase (426 aa).

At Lys-265 the chain carries N6-(pyridoxal phosphate)lysine.

The protein belongs to the class-III pyridoxal-phosphate-dependent aminotransferase family. HemL subfamily. In terms of assembly, homodimer. Pyridoxal 5'-phosphate is required as a cofactor.

It localises to the cytoplasm. The enzyme catalyses (S)-4-amino-5-oxopentanoate = 5-aminolevulinate. The protein operates within porphyrin-containing compound metabolism; protoporphyrin-IX biosynthesis; 5-aminolevulinate from L-glutamyl-tRNA(Glu): step 2/2. In Neisseria gonorrhoeae (strain NCCP11945), this protein is Glutamate-1-semialdehyde 2,1-aminomutase.